We begin with the raw amino-acid sequence, 50 residues long: Large ribosomal subunit protein bL33B (50 aa).

The protein belongs to the bacterial ribosomal protein bL33 family.

The sequence is that of Large ribosomal subunit protein bL33B from Metamycoplasma arthritidis (strain 158L3-1) (Mycoplasma arthritidis).